Consider the following 620-residue polypeptide: Pentatricopeptide repeat-containing protein At5g66520 (620 aa).

PPR repeat units lie at residues 79 to 113 (DTFL…SAPH), 114 to 148 (NAYT…GYEN), 149 to 179 (DVYA…IPEP), 180 to 210 (DDVS…MAEK), 211 to 245 (NAIS…DVEP), 246 to 280 (DNVS…RIRM), 281 to 311 (DSVL…IKKK), 312 to 346 (SVQA…GIKP), 347 to 382 (NVIT…NLKP), and 383 to 413 (TIEH…MPLK). The segment at 418 to 493 (IWGALLKACR…VPGCSTISLE (76 aa)) is type E motif. The type E(+) motif stretch occupies residues 494–524 (GTTHEFLAGDRSHPEIEKIQSKWRIMRRKLE). The type DYW motif stretch occupies residues 525-620 (ENGYVPELEE…DGKCSCGDYW (96 aa)).

This sequence belongs to the PPR family. PCMP-H subfamily.

This Arabidopsis thaliana (Mouse-ear cress) protein is Pentatricopeptide repeat-containing protein At5g66520 (PCMP-H61).